An 87-amino-acid polypeptide reads, in one-letter code: U3-theraphotoxin-Hhn1a 10 (87 aa).

The signal sequence occupies residues 1–24 (MVNMEASMFLTFAGLVLLFVVCYA). Residues 25 to 52 (SESEEKEFPKEMLSSIFAVDNDFKQEER) constitute a propeptide that is removed on maturation. Intrachain disulfides connect Cys-54/Cys-67, Cys-61/Cys-72, and Cys-66/Cys-79.

This sequence belongs to the neurotoxin 10 (Hwtx-1) family. 51 (Hntx-8) subfamily. Hntx-8 sub-subfamily. Expressed by the venom gland.

It is found in the secreted. Functionally, ion channel inhibitor. In Cyriopagopus hainanus (Chinese bird spider), this protein is U3-theraphotoxin-Hhn1a 10.